A 103-amino-acid chain; its full sequence is Large ribosomal subunit protein bL21 (103 aa).

Belongs to the bacterial ribosomal protein bL21 family. In terms of assembly, part of the 50S ribosomal subunit. Contacts protein L20.

In terms of biological role, this protein binds to 23S rRNA in the presence of protein L20. The sequence is that of Large ribosomal subunit protein bL21 from Shewanella woodyi (strain ATCC 51908 / MS32).